A 423-amino-acid chain; its full sequence is Glutamate-1-semialdehyde 2,1-aminomutase (423 aa).

An N6-(pyridoxal phosphate)lysine modification is found at lysine 263.

Belongs to the class-III pyridoxal-phosphate-dependent aminotransferase family. HemL subfamily. Pyridoxal 5'-phosphate serves as cofactor.

Its subcellular location is the cytoplasm. The enzyme catalyses (S)-4-amino-5-oxopentanoate = 5-aminolevulinate. It functions in the pathway porphyrin-containing compound metabolism; protoporphyrin-IX biosynthesis; 5-aminolevulinate from L-glutamyl-tRNA(Glu): step 2/2. The chain is Glutamate-1-semialdehyde 2,1-aminomutase from Ignicoccus hospitalis (strain KIN4/I / DSM 18386 / JCM 14125).